Here is a 101-residue protein sequence, read N- to C-terminus: Putative septation protein SpoVG (101 aa).

It belongs to the SpoVG family.

Its function is as follows. Could be involved in septation. This Staphylococcus saprophyticus subsp. saprophyticus (strain ATCC 15305 / DSM 20229 / NCIMB 8711 / NCTC 7292 / S-41) protein is Putative septation protein SpoVG.